Reading from the N-terminus, the 184-residue chain is MESESHWLWLFNTESGKLSVKLSDTDVFDTPYKPSQLVNIHFNEQMMDIEDATTFQIVSETLEAYPADKMPCAPQNAALNATAWCRFGRPQMPQSWHFQKSDISEWPLERRLCELNSGFDQGLFLILDTDDEFATCLLLSEGMQLSAIKSLRQYHVIKVTLNRLLPATVDLALSAQSNWGQQLA.

This sequence belongs to the ZapC family. In terms of assembly, interacts directly with FtsZ.

The protein resides in the cytoplasm. Its function is as follows. Contributes to the efficiency of the cell division process by stabilizing the polymeric form of the cell division protein FtsZ. Acts by promoting interactions between FtsZ protofilaments and suppressing the GTPase activity of FtsZ. This chain is Cell division protein ZapC, found in Idiomarina loihiensis (strain ATCC BAA-735 / DSM 15497 / L2-TR).